The chain runs to 343 residues: MTISVAVSGASGYAGGEVLRILAGHPDVTIGAITAHSNAGSRLGELQPHLHGLASRILEDTTVENLSGHDVVFLALPHGASAEIAAQLPEGTVVIDAGADHRLEDPAAWEKFYGSAHAGTWPYGLPELPGQREALKGATRIAVPGCYPTSALLALTPGFAANLLEPDDVVIVSASGTSGAGKAAKVNLIGAEVMGSMSPYGVGGGHRHTPEIEQGLSNAAGERVTVSFTPTLAPMSRGILTTATAKVKAGTTAEQLRQAWADAYDDEPFVHLLPEGQWPGTKSVQGSNHAAMQLAFDPHTGRVVVTCVIDNLTKGTAGGAVQSMNIALGLPETAGLNLQGVAP.

Cys-146 is a catalytic residue.

The protein belongs to the NAGSA dehydrogenase family. Type 1 subfamily.

It localises to the cytoplasm. The enzyme catalyses N-acetyl-L-glutamate 5-semialdehyde + phosphate + NADP(+) = N-acetyl-L-glutamyl 5-phosphate + NADPH + H(+). It participates in amino-acid biosynthesis; L-arginine biosynthesis; N(2)-acetyl-L-ornithine from L-glutamate: step 3/4. Catalyzes the NADPH-dependent reduction of N-acetyl-5-glutamyl phosphate to yield N-acetyl-L-glutamate 5-semialdehyde. This chain is N-acetyl-gamma-glutamyl-phosphate reductase, found in Pseudarthrobacter chlorophenolicus (strain ATCC 700700 / DSM 12829 / CIP 107037 / JCM 12360 / KCTC 9906 / NCIMB 13794 / A6) (Arthrobacter chlorophenolicus).